The primary structure comprises 102 residues: 10 kDa heat shock protein, mitochondrial (102 aa).

This sequence belongs to the GroES chaperonin family. In terms of assembly, homohexamer.

Its subcellular location is the mitochondrion matrix. In terms of biological role, eukaryotic CPN10 homolog which is essential for mitochondrial protein biogenesis, together with CPN60. Binds to CPN60 in the presence of Mg-ATP and suppresses the ATPase activity of the latter. The polypeptide is 10 kDa heat shock protein, mitochondrial (Schistosoma japonicum (Blood fluke)).